The chain runs to 496 residues: Glutamyl-tRNA(Gln) amidotransferase subunit A (496 aa).

Active-site charge relay system residues include Lys-75 and Ser-150. Ser-174 acts as the Acyl-ester intermediate in catalysis.

The protein belongs to the amidase family. GatA subfamily. In terms of assembly, heterotrimer of A, B and C subunits.

The enzyme catalyses L-glutamyl-tRNA(Gln) + L-glutamine + ATP + H2O = L-glutaminyl-tRNA(Gln) + L-glutamate + ADP + phosphate + H(+). In terms of biological role, allows the formation of correctly charged Gln-tRNA(Gln) through the transamidation of misacylated Glu-tRNA(Gln) in organisms which lack glutaminyl-tRNA synthetase. The reaction takes place in the presence of glutamine and ATP through an activated gamma-phospho-Glu-tRNA(Gln). In Burkholderia vietnamiensis (strain G4 / LMG 22486) (Burkholderia cepacia (strain R1808)), this protein is Glutamyl-tRNA(Gln) amidotransferase subunit A.